The chain runs to 91 residues: ATP synthase subunit c (91 aa).

2 helical membrane passes run 4-24 (FTMC…GTGI) and 53-73 (IGLA…LIIL).

This sequence belongs to the ATPase C chain family. F-type ATPases have 2 components, F(1) - the catalytic core - and F(0) - the membrane proton channel. F(1) has five subunits: alpha(3), beta(3), gamma(1), delta(1), epsilon(1). F(0) has three main subunits: a(1), b(2) and c(10-14). The alpha and beta chains form an alternating ring which encloses part of the gamma chain. F(1) is attached to F(0) by a central stalk formed by the gamma and epsilon chains, while a peripheral stalk is formed by the delta and b chains.

It localises to the cell inner membrane. F(1)F(0) ATP synthase produces ATP from ADP in the presence of a proton or sodium gradient. F-type ATPases consist of two structural domains, F(1) containing the extramembraneous catalytic core and F(0) containing the membrane proton channel, linked together by a central stalk and a peripheral stalk. During catalysis, ATP synthesis in the catalytic domain of F(1) is coupled via a rotary mechanism of the central stalk subunits to proton translocation. Its function is as follows. Key component of the F(0) channel; it plays a direct role in translocation across the membrane. A homomeric c-ring of between 10-14 subunits forms the central stalk rotor element with the F(1) delta and epsilon subunits. The sequence is that of ATP synthase subunit c from Geobacter sulfurreducens (strain ATCC 51573 / DSM 12127 / PCA).